The sequence spans 360 residues: D-alanine--D-alanine ligase (360 aa).

Positions 134-343 (KILAQRVGVP…YTELITRLIE (210 aa)) constitute an ATP-grasp domain. 169–224 (AEKLGRDMFVKPSNQGSSVGVSHVTNADEYAAALKEAFKYDDKVLVEETVPGTEVE) contributes to the ATP binding site. Mg(2+)-binding residues include Asp-297, Glu-310, and Asn-312.

This sequence belongs to the D-alanine--D-alanine ligase family. The cofactor is Mg(2+). It depends on Mn(2+) as a cofactor.

Its subcellular location is the cytoplasm. It carries out the reaction 2 D-alanine + ATP = D-alanyl-D-alanine + ADP + phosphate + H(+). It participates in cell wall biogenesis; peptidoglycan biosynthesis. Cell wall formation. This chain is D-alanine--D-alanine ligase, found in Lactobacillus helveticus (strain DPC 4571).